The sequence spans 383 residues: tRNA-specific 2-thiouridylase MnmA (383 aa).

Residues 30–37 (GMSGGVDS) and Met-56 each bind ATP. The segment at 116 to 118 (NPD) is interaction with target base in tRNA. Cys-121 functions as the Nucleophile in the catalytic mechanism. Cys-121 and Cys-218 form a disulfide bridge. Gly-146 provides a ligand contact to ATP. An interaction with tRNA region spans residues 168–170 (KDQ). Cys-218 acts as the Cysteine persulfide intermediate in catalysis. The interaction with tRNA stretch occupies residues 330–331 (RY).

The protein belongs to the MnmA/TRMU family.

It is found in the cytoplasm. It catalyses the reaction S-sulfanyl-L-cysteinyl-[protein] + uridine(34) in tRNA + AH2 + ATP = 2-thiouridine(34) in tRNA + L-cysteinyl-[protein] + A + AMP + diphosphate + H(+). Catalyzes the 2-thiolation of uridine at the wobble position (U34) of tRNA, leading to the formation of s(2)U34. The protein is tRNA-specific 2-thiouridylase MnmA of Haemophilus influenzae (strain ATCC 51907 / DSM 11121 / KW20 / Rd).